Here is a 258-residue protein sequence, read N- to C-terminus: Glutamate racemase (258 aa).

Residues 11 to 12 (DS) and 43 to 44 (YG) contribute to the substrate site. Cysteine 74 functions as the Proton donor/acceptor in the catalytic mechanism. 75 to 76 (NT) serves as a coordination point for substrate. Cysteine 182 acts as the Proton donor/acceptor in catalysis. 183 to 184 (TH) is a substrate binding site.

The protein belongs to the aspartate/glutamate racemases family.

It catalyses the reaction L-glutamate = D-glutamate. It functions in the pathway cell wall biogenesis; peptidoglycan biosynthesis. In terms of biological role, provides the (R)-glutamate required for cell wall biosynthesis. The chain is Glutamate racemase from Leptospira borgpetersenii serovar Hardjo-bovis (strain JB197).